The sequence spans 2325 residues: Protein sidekick homolog (2325 aa).

The signal sequence occupies residues 1–26 (MRNRLLLIFYTTTVLWTIGYTQLVLG). At 27–2019 (KPPIFQDGGS…IPDDPFYTTW (1993 aa)) the chain is on the extracellular side. 3 consecutive Ig-like C2-type domains span residues 28-105 (PPIF…AAIS), 217-319 (PSLQ…AYMT), and 324-397 (PILK…ADLA). 3 disulfides stabilise this stretch: cysteine 52/cysteine 94, cysteine 247/cysteine 301, and cysteine 345/cysteine 386. A glycan (N-linked (GlcNAc...) asparagine) is linked at asparagine 407. Ig-like C2-type domains lie at 456 to 544 (PSQK…VQVN) and 547 to 638 (SLIE…AMLQ). 2 cysteine pairs are disulfide-bonded: cysteine 480–cysteine 528 and cysteine 568–cysteine 622. Asparagine 632, asparagine 655, asparagine 807, asparagine 868, asparagine 932, and asparagine 1016 each carry an N-linked (GlcNAc...) asparagine glycan. Fibronectin type-III domains follow at residues 645–751 (MPER…MPQQ), 756–853 (APRN…TSEG), 858–957 (APKN…TEED), 961–1055 (SVDE…VPPE), 1059–1154 (RPSM…TLQT), 1159–1254 (PSQR…TYES), 1259–1359 (SPRN…TMED), 1363–1457 (PPES…SSVR), 1463–1566 (APAP…TLPS), 1571–1671 (QPIS…VGYS), 1673–1775 (PKRN…DKPG), 1776–1872 (PVGI…SKDG), and 1873–2004 (PPPP…TEQL). The interval 1036 to 1059 (TRKGDGPVEETKFESGVPPELPGR) is disordered. The span at 1037–1048 (RKGDGPVEETKF) shows a compositional bias: basic and acidic residues. Asparagine 1107 carries N-linked (GlcNAc...) asparagine glycosylation. The segment at 1137-1161 (KGRGAPSEPSRSFETLQTNPDTPSQ) is disordered. The span at 1145–1161 (PSRSFETLQTNPDTPSQ) shows a compositional bias: polar residues. The N-linked (GlcNAc...) asparagine glycan is linked to asparagine 1614. 2 disordered regions span residues 1857–1884 (GEQR…ITSG) and 1918–1947 (PANG…ATST). Asparagine 1863 is a glycosylation site (N-linked (GlcNAc...) asparagine). A compositionally biased stretch (low complexity) spans 1935–1947 (AKSAAQTAAATST). Residues 2020–2040 (WFMALVAMGAFVLIVIIIAIL) traverse the membrane as a helical segment. At 2041 to 2325 (CVTGSSAKYR…NLTTGFSSFV (285 aa)) the chain is on the cytoplasmic side. 4 disordered regions span residues 2080–2113 (NMTR…SVLG), 2164–2187 (TAYV…PTRS), 2202–2226 (RGHI…LQQP), and 2285–2325 (ILTG…SSFV). The span at 2091 to 2100 (PGTTQSWVSD) shows a compositional bias: polar residues. Low complexity predominate over residues 2215–2226 (GSQPQGSPLQQP). Polar residues-rich tracts occupy residues 2294–2305 (AGRSSTTDSTSE) and 2313–2325 (ATPN…SSFV).

Belongs to the sidekick family.

The protein localises to the membrane. Its function is as follows. Cell adhesion protein. The sequence is that of Protein sidekick homolog (rig-4) from Caenorhabditis elegans.